Consider the following 293-residue polypeptide: MAAITASMVAELRAKTDAPMMECKKALTEADGDLAKAEELLRVKLGNKASKAASRVTAEGVVASFVGGNAGALVELNCETDFVAKNDDFLAFSKTVAELVATQNPADVAALSALPLDGSTVDAVRLALIGKIGENVSIRRFVRFETANKIATYLHGARIGVIVEYTGADEQVGKDVAMHIAAMKPVALSSADVPAELIETERRVAEQKAAESGKPAEIVAKMVDGSVQKYLKEVSLLNQTFVKNDKQTIEQMLKAANAAVQKFALFVVGEGIEKRQDDFAAEVAAQVAAAKQQ.

An involved in Mg(2+) ion dislocation from EF-Tu region spans residues 80–83 (TDFV).

The protein belongs to the EF-Ts family.

The protein resides in the cytoplasm. Its function is as follows. Associates with the EF-Tu.GDP complex and induces the exchange of GDP to GTP. It remains bound to the aminoacyl-tRNA.EF-Tu.GTP complex up to the GTP hydrolysis stage on the ribosome. This Burkholderia cenocepacia (strain ATCC BAA-245 / DSM 16553 / LMG 16656 / NCTC 13227 / J2315 / CF5610) (Burkholderia cepacia (strain J2315)) protein is Elongation factor Ts.